The chain runs to 622 residues: MSGSKAESEEKAGSKQCPLVQVNEYKENEHIAYTSLRPIQITTLRKTAKVYLYPFSLSNSKLGLLKLSKSPVVNNSSKSVVHKKKDRKKTRRKVLTSKMKALSSKADSLLLKSSVDAYTESTRLGPKRTSDSATLSVDAESSDEDSAPGLDDFSGLSPYERKRLRNIRENANFFASLQLAESAARLRGMIKKRESPESKRKRPKKKENEIGCRRSMRLLKVDPLGVSLPASPTQPTLVEEEENPLLPPGPLEMIPENQDDSSELLKASLKTWAEMSQTSNEKTKKGLSSIKSYKANLSGMVISEATVRKVTKGAISSVALHPSEVRTLVAAGAKSGQIGLWDLTQQSEDAMYVFYAHSRYVSCLSFSPTNPAHLLSLSYDGTLRCGDFSSAVFEEVYRNEGNSPSSFDFLNDSSSLLVGHWDGHLSLVDRRTPGTSYEKFFNSSLEKIRTVHVHPLSRQYFVTAGLRDVHVYDARFLKSRGSQPLISLTEHSKSIASAYFSPVTGNRVVTTCADCKLRVFDSSSISSQLPLLSTIRHNTVTGRWLTRFQAVWDPKQEDCFIVGSMDHPRRVEVFHESGKNVHSLWGECLVSVCSLSAVHPTRYILAGGNSSGKLHVFMHQET.

Disordered regions lie at residues 75 to 94 (NSSKSVVHKKKDRKKTRRKV), 120 to 155 (ESTRLGPKRTSDSATLSVDAESSDEDSAPGLDDFSG), and 189 to 209 (MIKKRESPESKRKRPKKKENE). Basic residues predominate over residues 80–94 (VVHKKKDRKKTRRKV). WD repeat units follow at residues 310–351 (VTKG…EDAM), 356–398 (AHSR…EVYR), 400–438 (EGNSPSSFDFLNDSSSLLVGHWDGHLSLVDRRTPGTSYE), 443–482 (SSLEKIRTVHVHPLSRQYFVTAGLRDVHVYDARFLKSRGS), 490–530 (EHSK…SQLP), 540–584 (VTGR…VHSL), and 587–622 (ECLVSVCSLSAVHPTRYILAGGNSSGKLHVFMHQET).

It belongs to the WD repeat DDB2/WDR76 family. Interacts with CUL4A and/or CUL4B.

In terms of biological role, specifically binds 5-hydroxymethylcytosine (5hmC), suggesting that it acts as a specific reader of 5hmC. This chain is WD repeat-containing protein 76 (Wdr76), found in Mus musculus (Mouse).